A 427-amino-acid chain; its full sequence is Cyclin-L1-1 (427 aa).

Positions 258 to 427 (HRRTSDTNAS…SRDKDRHRRQ (170 aa)) are disordered. The segment covering 263–276 (DTNASKESPATTVA) has biased composition (polar residues). Composition is skewed to basic and acidic residues over residues 289 to 311 (QEKD…DDGK), 328 to 382 (KSEK…DRDR), 390 to 400 (DRSSGYSDKEK), and 407 to 421 (RDRG…SRDK).

This sequence belongs to the cyclin family. Cyclin L subfamily.

This Oryza sativa subsp. japonica (Rice) protein is Cyclin-L1-1 (CYCL1-1).